We begin with the raw amino-acid sequence, 129 residues long: UPF0225 protein XC_4246 (129 aa).

Belongs to the UPF0225 family.

The polypeptide is UPF0225 protein XC_4246 (Xanthomonas campestris pv. campestris (strain 8004)).